A 71-amino-acid polypeptide reads, in one-letter code: Plasticin-C1 (71 aa).

The first 22 residues, 1–22 (MAFLKKSLLLVLFLGLVSLSIC), serve as a signal peptide directing secretion. Positions 23 to 45 (EEEKRENEDEEKQEDDDQSENKR) are excised as a propeptide. Positions 25–46 (EKRENEDEEKQEDDDQSENKRG) are disordered. The segment covering 30 to 40 (EDEEKQEDDDQ) has biased composition (acidic residues). Asn-68 carries the post-translational modification Asparagine amide. The propeptide occupies 70 to 71 (ES).

It belongs to the frog skin active peptide (FSAP) family. Plasticin subfamily. As to expression, expressed by the skin glands.

It is found in the secreted. Its subcellular location is the target cell membrane. In terms of biological role, neutral peptide with no antimicrobial activity. May act in synergy with cationic peptides by enhancing their activity. Has a moderate hemolytic activity. The sequence is that of Plasticin-C1 from Agalychnis callidryas (Red-eyed tree frog).